Consider the following 175-residue polypeptide: NADH-ubiquinone oxidoreductase chain 6 (175 aa).

Helical transmembrane passes span 1-21 (MMTY…IGSP), 25-45 (SPIY…GMVL), 47-67 (FGGS…MLVV), 88-108 (VVLG…LYVL), 115-137 (LVFK…GVFS), and 149-169 (YGVW…VVIM).

It belongs to the complex I subunit 6 family. As to quaternary structure, core subunit of respiratory chain NADH dehydrogenase (Complex I) which is composed of 45 different subunits.

It is found in the mitochondrion inner membrane. It catalyses the reaction a ubiquinone + NADH + 5 H(+)(in) = a ubiquinol + NAD(+) + 4 H(+)(out). Its function is as follows. Core subunit of the mitochondrial membrane respiratory chain NADH dehydrogenase (Complex I) which catalyzes electron transfer from NADH through the respiratory chain, using ubiquinone as an electron acceptor. Essential for the catalytic activity and assembly of complex I. The chain is NADH-ubiquinone oxidoreductase chain 6 (MT-ND6) from Hippopotamus amphibius (Hippopotamus).